Here is a 219-residue protein sequence, read N- to C-terminus: Probable glutathione S-transferase GSTF1 (219 aa).

Positions 2–83 constitute a GST N-terminal domain; sequence TPVKVFGPAQ…YILRKYKTRE (82 aa). Residues Ser-12, 41–42, 54–55, and 67–68 contribute to the glutathione site; these read HK, QI, and ES. The GST C-terminal domain maps to 91 to 219; sequence NLREAAMVDV…LAAVMAPQGA (129 aa).

Belongs to the GST superfamily. Phi family. As to expression, constitutively expressed in roots.

The enzyme catalyses RX + glutathione = an S-substituted glutathione + a halide anion + H(+). In terms of biological role, conjugation of reduced glutathione to a wide number of exogenous and endogenous hydrophobic electrophiles. The sequence is that of Probable glutathione S-transferase GSTF1 (GSTF1) from Oryza sativa subsp. japonica (Rice).